Consider the following 344-residue polypeptide: Cyclin-G2 (344 aa).

A disordered region spans residues 298–324; that stretch reads CFDGSESEDSGEDMSCGEESLSSSPPS. A compositionally biased stretch (acidic residues) spans 302–313; that stretch reads SESEDSGEDMSC.

This sequence belongs to the cyclin family. Cyclin G subfamily. As to expression, highest levels in intestine. Intermediate levels in spleen, brain and kidney. Low levels in testis, stomach, pancreas, liver, salivary gland and muscle. According to PubMed:9139721 also abundant in thymus.

Its subcellular location is the cytoplasm. The protein localises to the nucleus. Its function is as follows. May play a role in growth regulation and in negative regulation of cell cycle progression. In Mus musculus (Mouse), this protein is Cyclin-G2 (Ccng2).